The following is a 161-amino-acid chain: Urease accessory protein UreE (161 aa).

The interval 133 to 161 (EPEAGAYQSAPHSHSHAHDHPFVRLPAHS) is disordered.

It belongs to the UreE family.

Its subcellular location is the cytoplasm. In terms of biological role, involved in urease metallocenter assembly. Binds nickel. Probably functions as a nickel donor during metallocenter assembly. In Pseudomonas putida (strain W619), this protein is Urease accessory protein UreE.